The sequence spans 289 residues: Putative transmembrane protein ORF289 (289 aa).

Residues 1–152 (MAIAKEFLLT…QYTSVVTFRT (152 aa)) are Extracellular-facing. Residues 153 to 173 (LVAPILYFFALFLVPAWSTVL) form a helical membrane-spanning segment. Residues 174–234 (KQNPTFPQSQ…NGEVTSTQVN (61 aa)) lie on the Cytoplasmic side of the membrane. A helical transmembrane segment spans residues 235-255 (APIFIGVTTPSGVLVLAYNYY). Topologically, residues 256–289 (SGTISKYVSLTVTTTYGSATVINQFETKTTGGTT) are extracellular.

The protein resides in the host membrane. The chain is Putative transmembrane protein ORF289 from Acidianus sp. F28 (AFV-2).